Consider the following 1485-residue polypeptide: Chromosome partition protein MukB (1485 aa).

Residue 34-41 (GGNGAGKS) coordinates ATP. Coiled coils occupy residues 337–480 (LNLV…QAYQ), 509–605 (QHLA…PVWL), 780–805 (RAARENRLETLYQERDRLAERYATLS), 835–915 (EAEI…IQQH), 977–1116 (GMLT…AKAG), and 1210–1235 (EAIEQMEIELGRLTEELTAREQKLAI). Residues 666–783 (PSGAEDARLI…EVPLFGRAAR (118 aa)) are flexible hinge.

Belongs to the SMC family. MukB subfamily. In terms of assembly, homodimerization via its hinge domain. Binds to DNA via its C-terminal region. Interacts, and probably forms a ternary complex, with MukE and MukF via its C-terminal region. The complex formation is stimulated by calcium or magnesium. Interacts with tubulin-related protein FtsZ.

The protein localises to the cytoplasm. It is found in the nucleoid. In terms of biological role, plays a central role in chromosome condensation, segregation and cell cycle progression. Functions as a homodimer, which is essential for chromosome partition. Involved in negative DNA supercoiling in vivo, and by this means organize and compact chromosomes. May achieve or facilitate chromosome segregation by condensation DNA from both sides of a centrally located replisome during cell division. This chain is Chromosome partition protein MukB, found in Yersinia pseudotuberculosis serotype O:1b (strain IP 31758).